The chain runs to 490 residues: Probable cytochrome P450 518B1 (490 aa).

Residues 2 to 22 (LTNIIILIILYLFYDFCYKNF) form a helical membrane-spanning segment. Cys437 contributes to the heme binding site.

The protein belongs to the cytochrome P450 family. It depends on heme as a cofactor.

The protein localises to the membrane. This Dictyostelium discoideum (Social amoeba) protein is Probable cytochrome P450 518B1 (cyp518B1).